Reading from the N-terminus, the 338-residue chain is Anthranilate phosphoribosyltransferase (338 aa).

5-phospho-alpha-D-ribose 1-diphosphate is bound by residues G78, 81 to 82, S86, 88 to 91, 106 to 114, and S118; these read GD, NIST, and KHGNKSVTS. G78 is an anthranilate binding site. Residue S90 participates in Mg(2+) binding. N109 is a binding site for anthranilate. R163 provides a ligand contact to anthranilate. Residues D222 and E223 each coordinate Mg(2+).

The protein belongs to the anthranilate phosphoribosyltransferase family. Homodimer. Requires Mg(2+) as cofactor.

It carries out the reaction N-(5-phospho-beta-D-ribosyl)anthranilate + diphosphate = 5-phospho-alpha-D-ribose 1-diphosphate + anthranilate. It participates in amino-acid biosynthesis; L-tryptophan biosynthesis; L-tryptophan from chorismate: step 2/5. In terms of biological role, catalyzes the transfer of the phosphoribosyl group of 5-phosphorylribose-1-pyrophosphate (PRPP) to anthranilate to yield N-(5'-phosphoribosyl)-anthranilate (PRA). In Staphylococcus saprophyticus subsp. saprophyticus (strain ATCC 15305 / DSM 20229 / NCIMB 8711 / NCTC 7292 / S-41), this protein is Anthranilate phosphoribosyltransferase.